Reading from the N-terminus, the 94-residue chain is ESAT-6-like protein EsxI (94 aa).

It belongs to the WXG100 family. ESAT-6 subfamily.

Its subcellular location is the secreted. This chain is ESAT-6-like protein EsxI, found in Mycobacterium tuberculosis (strain ATCC 25618 / H37Rv).